A 356-amino-acid polypeptide reads, in one-letter code: Sterol-4-alpha-carboxylate 3-dehydrogenase, decarboxylating (356 aa).

Met1 carries the post-translational modification N-acetylmethionine. Residue Tyr155 is the Proton acceptor of the active site. Lys159 provides a ligand contact to NAD(+). Residues 281–301 (WLAYYLALLVSLLVMVISPVI) form a helical membrane-spanning segment. The Prevents secretion from ER signature appears at 353–356 (RKVM).

Belongs to the 3-beta-HSD family. Homodimer.

It is found in the endoplasmic reticulum membrane. It localises to the lipid droplet. It carries out the reaction a 3beta-hydroxysteroid-4alpha-carboxylate + NADP(+) = a 3-oxosteroid + CO2 + NADPH. The enzyme catalyses a 3beta-hydroxysteroid-4alpha-carboxylate + NAD(+) = a 3-oxosteroid + CO2 + NADH. It catalyses the reaction 4alpha-carboxyzymosterol + NADP(+) = zymosterone + CO2 + NADPH. The catalysed reaction is 4alpha-carboxy-4beta-methyl-5alpha-cholest-8-en-3beta-ol + NADP(+) = 4alpha-methyl-5alpha-cholest-8-en-3-one + CO2 + NADPH. It carries out the reaction 4alpha-carboxy-5alpha-cholest-8-ene-3beta-ol + NADP(+) = 5alpha-cholest-8-en-3-one + CO2 + NADPH. The enzyme catalyses 4beta-methylzymosterol-4alpha-carboxylate + NADP(+) = 3-dehydro-4-methylzymosterol + CO2 + NADPH. It catalyses the reaction 4beta-methylzymosterol-4alpha-carboxylate + NAD(+) = 3-dehydro-4-methylzymosterol + CO2 + NADH. The catalysed reaction is 4alpha-carboxy-5alpha-cholest-8-ene-3beta-ol + NAD(+) = 5alpha-cholest-8-en-3-one + CO2 + NADH. It carries out the reaction 4alpha-carboxy-4beta-methyl-5alpha-cholest-8-en-3beta-ol + NAD(+) = 4alpha-methyl-5alpha-cholest-8-en-3-one + CO2 + NADH. The enzyme catalyses 4alpha-carboxyzymosterol + NAD(+) = zymosterone + CO2 + NADH. It participates in steroid biosynthesis; zymosterol biosynthesis; zymosterol from lanosterol: step 4/6. Its function is as follows. Catalyzes the NAD(P)(+)-dependent oxidative decarboxylation of the C4 methyl groups of 4-alpha-carboxysterols in post-squalene cholesterol biosynthesis. Also plays a role in the regulation of the endocytic trafficking of EGFR. The chain is Sterol-4-alpha-carboxylate 3-dehydrogenase, decarboxylating (NSDHL) from Bos taurus (Bovine).